Here is a 174-residue protein sequence, read N- to C-terminus: 3-hydroxydecanoyl-[acyl-carrier-protein] dehydratase (174 aa).

His-71 is an active-site residue.

This sequence belongs to the thioester dehydratase family. FabA subfamily. As to quaternary structure, homodimer.

It is found in the cytoplasm. The catalysed reaction is a (3R)-hydroxyacyl-[ACP] = a (2E)-enoyl-[ACP] + H2O. The enzyme catalyses (3R)-hydroxydecanoyl-[ACP] = (2E)-decenoyl-[ACP] + H2O. It catalyses the reaction (2E)-decenoyl-[ACP] = (3Z)-decenoyl-[ACP]. Its pathway is lipid metabolism; fatty acid biosynthesis. Necessary for the introduction of cis unsaturation into fatty acids. Catalyzes the dehydration of (3R)-3-hydroxydecanoyl-ACP to E-(2)-decenoyl-ACP and then its isomerization to Z-(3)-decenoyl-ACP. Can catalyze the dehydratase reaction for beta-hydroxyacyl-ACPs with saturated chain lengths up to 16:0, being most active on intermediate chain length. In Nitrobacter winogradskyi (strain ATCC 25391 / DSM 10237 / CIP 104748 / NCIMB 11846 / Nb-255), this protein is 3-hydroxydecanoyl-[acyl-carrier-protein] dehydratase.